Consider the following 228-residue polypeptide: 2-C-methyl-D-erythritol 4-phosphate cytidylyltransferase (228 aa).

It belongs to the IspD/TarI cytidylyltransferase family. IspD subfamily.

It catalyses the reaction 2-C-methyl-D-erythritol 4-phosphate + CTP + H(+) = 4-CDP-2-C-methyl-D-erythritol + diphosphate. Its pathway is isoprenoid biosynthesis; isopentenyl diphosphate biosynthesis via DXP pathway; isopentenyl diphosphate from 1-deoxy-D-xylulose 5-phosphate: step 2/6. In terms of biological role, catalyzes the formation of 4-diphosphocytidyl-2-C-methyl-D-erythritol from CTP and 2-C-methyl-D-erythritol 4-phosphate (MEP). The sequence is that of 2-C-methyl-D-erythritol 4-phosphate cytidylyltransferase from Halalkalibacterium halodurans (strain ATCC BAA-125 / DSM 18197 / FERM 7344 / JCM 9153 / C-125) (Bacillus halodurans).